The sequence spans 97 residues: Probable lipopolysaccharide assembly protein A (97 aa).

2 helical membrane-spanning segments follow: residues 1 to 21 and 46 to 66; these read MIKY…AITI and VAIL…FFYI. Residues 67 to 95 adopt a coiled-coil conformation; sequence KLKLKNMALARQVKRQTLQINELTTTRDK.

Belongs to the LapA family.

Its subcellular location is the cell inner membrane. In terms of biological role, involved in the assembly of lipopolysaccharide (LPS). This Haemophilus influenzae (strain ATCC 51907 / DSM 11121 / KW20 / Rd) protein is Probable lipopolysaccharide assembly protein A.